An 88-amino-acid chain; its full sequence is Large ribosomal subunit protein bL31B (88 aa).

The protein belongs to the bacterial ribosomal protein bL31 family. Type B subfamily. In terms of assembly, part of the 50S ribosomal subunit.

This chain is Large ribosomal subunit protein bL31B, found in Nocardia farcinica (strain IFM 10152).